The following is a 227-amino-acid chain: ATP-dependent dethiobiotin synthetase BioD (227 aa).

D13–Y18 is a binding site for ATP. T17 contributes to the Mg(2+) binding site. The active site involves K38. S42 lines the substrate pocket. ATP contacts are provided by residues D55, E116–G119, and N179–N180. Residues D55 and E116 each coordinate Mg(2+).

The protein belongs to the dethiobiotin synthetase family. In terms of assembly, homodimer. Mg(2+) is required as a cofactor.

Its subcellular location is the cytoplasm. The enzyme catalyses (7R,8S)-7,8-diammoniononanoate + CO2 + ATP = (4R,5S)-dethiobiotin + ADP + phosphate + 3 H(+). Its pathway is cofactor biosynthesis; biotin biosynthesis; biotin from 7,8-diaminononanoate: step 1/2. Functionally, catalyzes a mechanistically unusual reaction, the ATP-dependent insertion of CO2 between the N7 and N8 nitrogen atoms of 7,8-diaminopelargonic acid (DAPA, also called 7,8-diammoniononanoate) to form a ureido ring. The protein is ATP-dependent dethiobiotin synthetase BioD of Clostridium botulinum (strain Kyoto / Type A2).